The following is a 370-amino-acid chain: S-adenosylmethionine:tRNA ribosyltransferase-isomerase (370 aa).

The protein belongs to the QueA family. In terms of assembly, monomer.

It localises to the cytoplasm. It carries out the reaction 7-aminomethyl-7-carbaguanosine(34) in tRNA + S-adenosyl-L-methionine = epoxyqueuosine(34) in tRNA + adenine + L-methionine + 2 H(+). It functions in the pathway tRNA modification; tRNA-queuosine biosynthesis. Transfers and isomerizes the ribose moiety from AdoMet to the 7-aminomethyl group of 7-deazaguanine (preQ1-tRNA) to give epoxyqueuosine (oQ-tRNA). The polypeptide is S-adenosylmethionine:tRNA ribosyltransferase-isomerase (Prochlorococcus marinus (strain SARG / CCMP1375 / SS120)).